Reading from the N-terminus, the 150-residue chain is uncharacterized protein (150 aa).

The chain crosses the membrane as a helical span at residues 19 to 39 (SLGMCVILIDGLIVLTAAFVF).

This sequence to B.subtilis YpjC, YqfU and YitT.

The protein localises to the cell membrane. This is an uncharacterized protein from Bacillus sp. (strain PS3).